Consider the following 683-residue polypeptide: Hexamerin 70b (683 aa).

The first 21 residues, 1-21 (MIVIMKAGFLFLASLCLLVQA), serve as a signal peptide directing secretion. One can recognise a Hemocyanin N-terminal domain in the interval 32-153 (VTRQKNIYEL…VAVIHRPDTK (122 aa)). The Hemocyanin middle domain occupies 159 to 428 (PMYEVMPHLY…SIYKTILDYY (270 aa)). N-linked (GlcNAc...) asparagine glycosylation occurs at N203. The 237-residue stretch at 437-673 (KYTTEELNFP…IHVKEVLVHH (237 aa)) folds into the Hemocyanin C-terminal domain.

It belongs to the hemocyanin/hexamerin family. In terms of assembly, probable homohexamer. In terms of tissue distribution, expressed in the fat body and secreted into the hemolymph (at protein level). Present in trophocytes and oenocytes of the fat body (at protein level).

It localises to the secreted. The protein localises to the nucleus. It is found in the cytoplasm. Its subcellular location is the cytoplasmic granule. Functionally, storage protein that may function as a nutrient supply to compensate for lack of dietary proteins during metamorphosis and egg production. This chain is Hexamerin 70b, found in Apis mellifera (Honeybee).